Consider the following 53-residue polypeptide: Large ribosomal subunit protein eL24 (53 aa).

The Zn(2+) site is built by cysteine 4, cysteine 7, cysteine 30, and cysteine 34. Residues 4–34 (CSFCHEEIEPGTGKMYVKRDGTIYFFCSSKC) form a C4-type zinc finger.

Belongs to the eukaryotic ribosomal protein eL24 family. Part of the 50S ribosomal subunit. Forms a cluster with proteins L3 and L14. Zn(2+) serves as cofactor.

Its function is as follows. Binds to the 23S rRNA. The sequence is that of Large ribosomal subunit protein eL24 from Methanothermobacter thermautotrophicus (strain ATCC 29096 / DSM 1053 / JCM 10044 / NBRC 100330 / Delta H) (Methanobacterium thermoautotrophicum).